The primary structure comprises 207 residues: Small ribosomal subunit protein uS4 (207 aa).

The segment at 31–54 (KSKFETKPGQHGRTSGSRTSDFGL) is disordered. Polar residues predominate over residues 42–52 (GRTSGSRTSDF). The S4 RNA-binding domain occupies 97 to 158 (SRLDNVVYRM…KAKKQLRVTE (62 aa)).

The protein belongs to the universal ribosomal protein uS4 family. In terms of assembly, part of the 30S ribosomal subunit. Contacts protein S5. The interaction surface between S4 and S5 is involved in control of translational fidelity.

Functionally, one of the primary rRNA binding proteins, it binds directly to 16S rRNA where it nucleates assembly of the body of the 30S subunit. In terms of biological role, with S5 and S12 plays an important role in translational accuracy. This Methylibium petroleiphilum (strain ATCC BAA-1232 / LMG 22953 / PM1) protein is Small ribosomal subunit protein uS4.